Here is a 199-residue protein sequence, read N- to C-terminus: Ribonuclease HII (199 aa).

In terms of domain architecture, RNase H type-2 spans 14-199 (GLLAGVDEAG…SFAPVAEVLR (186 aa)). 3 residues coordinate a divalent metal cation: aspartate 20, glutamate 21, and aspartate 112.

It belongs to the RNase HII family. It depends on Mn(2+) as a cofactor. Mg(2+) serves as cofactor.

The protein resides in the cytoplasm. The catalysed reaction is Endonucleolytic cleavage to 5'-phosphomonoester.. Functionally, endonuclease that specifically degrades the RNA of RNA-DNA hybrids. This Polaromonas sp. (strain JS666 / ATCC BAA-500) protein is Ribonuclease HII.